The primary structure comprises 474 residues: Glutamate--tRNA ligase 1 (474 aa).

The 'HIGH' region signature appears at 11–21 (PSPTGYLHIGG). The 'KMSKS' region signature appears at 240–244 (KLSKR). Lys243 contributes to the ATP binding site.

Belongs to the class-I aminoacyl-tRNA synthetase family. Glutamate--tRNA ligase type 1 subfamily. Monomer.

It is found in the cytoplasm. The enzyme catalyses tRNA(Glu) + L-glutamate + ATP = L-glutamyl-tRNA(Glu) + AMP + diphosphate. Catalyzes the attachment of glutamate to tRNA(Glu) in a two-step reaction: glutamate is first activated by ATP to form Glu-AMP and then transferred to the acceptor end of tRNA(Glu). The sequence is that of Glutamate--tRNA ligase 1 from Mesorhizobium japonicum (strain LMG 29417 / CECT 9101 / MAFF 303099) (Mesorhizobium loti (strain MAFF 303099)).